A 987-amino-acid chain; its full sequence is Pro-apoptotic serine protease NMA111 (987 aa).

The tract at residues 1-29 (MPDIPTKRRLSNGSVIDNTNKRQMQSSFV) is disordered. A compositionally biased stretch (polar residues) spans 11-28 (SNGSVIDNTNKRQMQSSF). The segment at 69–262 (VKSVVSIQFT…LPVYRPLRAL (194 aa)) is serine protease. Catalysis depends on charge relay system residues His110, Asp141, and Ser224. PDZ domains lie at 279–364 (EWSL…VVIQ) and 878–950 (PHHG…VSFD).

This sequence belongs to the peptidase S1C family.

Its subcellular location is the nucleus. Its function is as follows. Nuclear serine protease which mediates apoptosis. This chain is Pro-apoptotic serine protease NMA111 (NMA111), found in Debaryomyces hansenii (strain ATCC 36239 / CBS 767 / BCRC 21394 / JCM 1990 / NBRC 0083 / IGC 2968) (Yeast).